The following is a 185-amino-acid chain: Peptidyl-tRNA hydrolase (185 aa).

Residue Tyr-14 coordinates tRNA. The active-site Proton acceptor is the His-19. Positions 63, 65, and 111 each coordinate tRNA.

This sequence belongs to the PTH family. Monomer.

The protein localises to the cytoplasm. The enzyme catalyses an N-acyl-L-alpha-aminoacyl-tRNA + H2O = an N-acyl-L-amino acid + a tRNA + H(+). Hydrolyzes ribosome-free peptidyl-tRNAs (with 1 or more amino acids incorporated), which drop off the ribosome during protein synthesis, or as a result of ribosome stalling. Functionally, catalyzes the release of premature peptidyl moieties from peptidyl-tRNA molecules trapped in stalled 50S ribosomal subunits, and thus maintains levels of free tRNAs and 50S ribosomes. In Desulfitobacterium hafniense (strain Y51), this protein is Peptidyl-tRNA hydrolase.